A 159-amino-acid chain; its full sequence is LOB domain-containing protein 25 (159 aa).

Residues 38 to 139 enclose the LOB domain; it reads SPCAACKFLR…RELEETNADL (102 aa).

Belongs to the LOB domain-containing protein family. In terms of tissue distribution, expressed in young shoots, roots, stems, leaves and flowers.

This is LOB domain-containing protein 25 (LBD25) from Arabidopsis thaliana (Mouse-ear cress).